Reading from the N-terminus, the 499-residue chain is Glycerol kinase (499 aa).

Thr-17 lines the ADP pocket. Thr-17, Thr-18, and Ser-19 together coordinate ATP. Thr-17 is a binding site for sn-glycerol 3-phosphate. Residue Arg-21 participates in ADP binding. Sn-glycerol 3-phosphate is bound by residues Arg-87, Glu-88, Tyr-139, and Asp-243. Positions 87, 88, 139, 243, and 244 each coordinate glycerol. Positions 265 and 308 each coordinate ADP. ATP-binding residues include Thr-265, Gly-308, Gln-312, and Gly-409. 2 residues coordinate ADP: Gly-409 and Asn-413.

The protein belongs to the FGGY kinase family.

It catalyses the reaction glycerol + ATP = sn-glycerol 3-phosphate + ADP + H(+). Its pathway is polyol metabolism; glycerol degradation via glycerol kinase pathway; sn-glycerol 3-phosphate from glycerol: step 1/1. Inhibited by fructose 1,6-bisphosphate (FBP). Key enzyme in the regulation of glycerol uptake and metabolism. Catalyzes the phosphorylation of glycerol to yield sn-glycerol 3-phosphate. The chain is Glycerol kinase from Pseudomonas putida (strain GB-1).